The chain runs to 290 residues: Poly-beta-1,6-N-acetyl-D-glucosamine N-deacetylase (290 aa).

An N-terminal signal peptide occupies residues 1–28 (MKYRKLIILVLSILIILPVSTLDGHHIA). One can recognise a NodB homology domain in the interval 114–290 (RSVWINFDDM…KRWDGFHEKD (177 aa)).

The protein belongs to the polysaccharide deacetylase family.

It is found in the secreted. Its subcellular location is the cell wall. Catalyzes the N-deacetylation of poly-beta-1,6-N-acetyl-D-glucosamine (PNAG, also referred to as PIA), a biofilm adhesin polysaccharide. N-deacetylation is crucial for attachment of the polysaccharide to the bacterial cell surface; it leads to the introduction of positive charges in the otherwise neutral PIA polymer, allowing electrostatic interactions. The chain is Poly-beta-1,6-N-acetyl-D-glucosamine N-deacetylase (icaB) from Staphylococcus aureus (strain MRSA252).